We begin with the raw amino-acid sequence, 472 residues long: Karilysin (472 aa).

The signal sequence occupies residues 1–20; that stretch reads MKRFILLFFLSTIAIFKVYS. The propeptide at 21–34 is activation peptide; the sequence is QRLYDNGPLTGDNN. Histidine 102, aspartate 104, histidine 117, histidine 133, and histidine 155 together coordinate Zn(2+). Glutamate 156 (proton donor/acceptor) is an active-site residue. 2 residues coordinate Zn(2+): histidine 159 and histidine 165. The propeptide at 196–386 is removed in short form; it reads YGYPFSISGP…AVSCSRTISP (191 aa). The propeptide at 387 to 472 is removed in long form; the sequence is FTLSPNPATD…QTYTQKLIKK (86 aa).

The protein belongs to the peptidase M10A family. It depends on Zn(2+) as a cofactor. Post-translationally, processes itself into the mature 18-kDa enzyme (Kly18) through sequential autoproteolytic cleavage at both the N- and C-termini. However, the maturation intermediate Kly38 is found to be more active than Kly18 and the rate for its processing is slow, which raises the question as to whether Kly38 is a physiologically relevant entity.

The protein resides in the secreted. Autoprocessing and proteolytic activity are completely inhibited by EDTA and 1,10-phenanthroline in vitro. Proteolytic activity is 3-fold enhanced by Ca(2+) due to stabilization of the protein structure but inhibited by an excess of Zn(2+). Inhibitory studies of karilysin identified several phage display-selected peptides with apparent inhibition constants (Ki) in the micromolar range, among which is the tetrapeptide SWFP (Ki=10.7 uM). Its function is as follows. Metalloprotease able to cleave casein, gelatin, elastin, fibrinogen and fibronectin. Shows exclusive preference for hydrophobic residues, especially Leu, Tyr and Met, at the P1' position of substrates, and for Pro or Ala at P3. Can efficiently cleave the antimicrobial peptide LL-37 which is a component of the immune system, leading to a significant reduction of its bactericidal activity. Is also able to inhibit all pathways of the human complement system. The classical and lectin complement pathways are inhibited because of the efficient degradation of mannose-binding lectin, ficolin-2, ficolin-3, and C4 by karilysin, whereas inhibition of the terminal pathway is caused by cleavage of C5. Thus, karilysin appears to be a major virulence factor of T.forsythia that contributes to evasion of the human immune response and periodontal disease. Seems to act synergistically with gingipains from the periodontal pathogen P.gingivalis present at the same sites of infection. The protein is Karilysin (kly) of Tannerella forsythia (strain ATCC 43037 / JCM 10827 / CCUG 21028 A / KCTC 5666 / FDC 338) (Bacteroides forsythus).